A 514-amino-acid chain; its full sequence is tRNA-2-methylthio-N(6)-dimethylallyladenosine synthase (514 aa).

Residues 68–186 (RTFLIKTYGC…LPEILEEAYL (119 aa)) form the MTTase N-terminal domain. [4Fe-4S] cluster contacts are provided by Cys-77, Cys-113, Cys-147, Cys-223, Cys-227, and Cys-230. The Radical SAM core domain maps to 209–439 (REGSTKAWVN…NKKVGHYSEK (231 aa)). One can recognise a TRAM domain in the interval 442–505 (NQYEGKTVTV…QYSLNGTFKE (64 aa)).

Belongs to the methylthiotransferase family. MiaB subfamily. Monomer. It depends on [4Fe-4S] cluster as a cofactor.

Its subcellular location is the cytoplasm. The enzyme catalyses N(6)-dimethylallyladenosine(37) in tRNA + (sulfur carrier)-SH + AH2 + 2 S-adenosyl-L-methionine = 2-methylsulfanyl-N(6)-dimethylallyladenosine(37) in tRNA + (sulfur carrier)-H + 5'-deoxyadenosine + L-methionine + A + S-adenosyl-L-homocysteine + 2 H(+). Catalyzes the methylthiolation of N6-(dimethylallyl)adenosine (i(6)A), leading to the formation of 2-methylthio-N6-(dimethylallyl)adenosine (ms(2)i(6)A) at position 37 in tRNAs that read codons beginning with uridine. The chain is tRNA-2-methylthio-N(6)-dimethylallyladenosine synthase from Staphylococcus haemolyticus (strain JCSC1435).